The sequence spans 449 residues: MASSSLHFFFFLTLLLPFTFTTATRDTCATAAPDGSDDLSIIPINAKCSPFAPTHVSASVIDTVLHMASSDSHRLTYLSSLVAGKPKPTSVPVASGNQLHIGNYVVRAKLGTPPQLMFMVLDTSNDAVWLPCSGCSGCSNASTSFNTNSSSTYSTVSCSTAQCTQARGLTCPSSSPQPSVCSFNQSYGGDSSFSASLVQDTLTLAPDVIPNFSFGCINSASGNSLPPQGLMGLGRGPMSLVSQTTSLYSGVFSYCLPSFRSFYFSGSLKLGLLGQPKSIRYTPLLRNPRRPSLYYVNLTGVSVGSVQVPVDPVYLTFDANSGAGTIIDSGTVITRFAQPVYEAIRDEFRKQVNVSSFSTLGAFDTCFSADNENVAPKITLHMTSLDLKLPMENTLIHSSAGTLTCLSMAGIRQNANAVLNVIANLQQQNLRILFDVPNSRIGIAPEPCN.

The N-terminal stretch at 1–23 is a signal peptide; sequence MASSSLHFFFFLTLLLPFTFTTA. Residues 104–444 form the Peptidase A1 domain; the sequence is YVVRAKLGTP…DVPNSRIGIA (341 aa). Asp-122 is a catalytic residue. An intrachain disulfide couples Cys-132 to Cys-138. Residues Asn-140, Asn-148, Asn-184, Asn-211, and Asn-297 are each glycosylated (N-linked (GlcNAc...) asparagine). Residue Asp-328 is part of the active site. Asn-353 carries N-linked (GlcNAc...) asparagine glycosylation. Cys-366 and Cys-405 form a disulfide bridge.

Belongs to the peptidase A1 family.

It localises to the secreted. The protein localises to the extracellular space. The protein resides in the apoplast. This chain is Aspartyl protease AED3, found in Arabidopsis thaliana (Mouse-ear cress).